Consider the following 150-residue polypeptide: Large ribosomal subunit protein bL9 (150 aa).

It belongs to the bacterial ribosomal protein bL9 family.

In terms of biological role, binds to the 23S rRNA. The polypeptide is Large ribosomal subunit protein bL9 (Streptococcus agalactiae serotype III (strain NEM316)).